The sequence spans 354 residues: Anthranilate phosphoribosyltransferase (354 aa).

5-phospho-alpha-D-ribose 1-diphosphate is bound by residues Gly94, 97 to 98, Thr102, 104 to 107, 122 to 130, and Ser134; these read GD, NIST, and KHGNRAASS. Gly94 is an anthranilate binding site. A Mg(2+)-binding site is contributed by Ser106. Residue Asn125 coordinates anthranilate. Arg180 lines the anthranilate pocket. Residues Asp238 and Glu239 each coordinate Mg(2+).

Belongs to the anthranilate phosphoribosyltransferase family. Homodimer. Requires Mg(2+) as cofactor.

It carries out the reaction N-(5-phospho-beta-D-ribosyl)anthranilate + diphosphate = 5-phospho-alpha-D-ribose 1-diphosphate + anthranilate. It participates in amino-acid biosynthesis; L-tryptophan biosynthesis; L-tryptophan from chorismate: step 2/5. Catalyzes the transfer of the phosphoribosyl group of 5-phosphorylribose-1-pyrophosphate (PRPP) to anthranilate to yield N-(5'-phosphoribosyl)-anthranilate (PRA). The sequence is that of Anthranilate phosphoribosyltransferase from Streptomyces griseus subsp. griseus (strain JCM 4626 / CBS 651.72 / NBRC 13350 / KCC S-0626 / ISP 5235).